A 375-amino-acid chain; its full sequence is tRNA-specific 2-thiouridylase MnmA (375 aa).

ATP-binding positions include 16–23 (GMSGGVDS) and Met-42. Positions 102-104 (NPD) are interaction with target base in tRNA. Cys-107 (nucleophile) is an active-site residue. Cys-107 and Cys-203 form a disulfide bridge. Gly-131 contacts ATP. The interaction with tRNA stretch occupies residues 153–155 (KDQ). Catalysis depends on Cys-203, which acts as the Cysteine persulfide intermediate. An interaction with tRNA region spans residues 315 to 316 (RY).

The protein belongs to the MnmA/TRMU family.

The protein localises to the cytoplasm. The enzyme catalyses S-sulfanyl-L-cysteinyl-[protein] + uridine(34) in tRNA + AH2 + ATP = 2-thiouridine(34) in tRNA + L-cysteinyl-[protein] + A + AMP + diphosphate + H(+). Catalyzes the 2-thiolation of uridine at the wobble position (U34) of tRNA, leading to the formation of s(2)U34. This chain is tRNA-specific 2-thiouridylase MnmA, found in Pseudomonas paraeruginosa (strain DSM 24068 / PA7) (Pseudomonas aeruginosa (strain PA7)).